The primary structure comprises 500 residues: Serine/threonine protein phosphatase 2A 57 kDa regulatory subunit B' kappa isoform (500 aa).

Residues 1–53 (MFKQFLSKLPRKSSKSDSGELNRSSSGPVSSPVQRSGTSGGGSGPVRSNSGKR) are disordered. Polar residues predominate over residues 21 to 37 (LNRSSSGPVSSPVQRSG).

The protein belongs to the phosphatase 2A regulatory subunit B56 family. PP2A consists of a common heteromeric enzyme, composed of a catalytic subunit (subunits C), a constant regulatory subunit (subunit A), and a variety of regulatory subunits such as subunits B (the R2/B/PR55/B55, R3/B''/PR72/PR130/PR59 and R5/B'/B56 families).

The protein localises to the cytoplasm. Functionally, the B regulatory subunit may modulate substrate selectivity and catalytic activity, and may also direct the localization of the catalytic enzyme to a particular subcellular compartment. In Arabidopsis thaliana (Mouse-ear cress), this protein is Serine/threonine protein phosphatase 2A 57 kDa regulatory subunit B' kappa isoform (B'KAPPA).